A 312-amino-acid polypeptide reads, in one-letter code: Pantothenate synthetase (312 aa).

Met42–His49 lines the ATP pocket. His49 functions as the Proton donor in the catalytic mechanism. Gln73 is a (R)-pantoate binding site. Gln73 is a beta-alanine binding site. Gly159 to Asp162 lines the ATP pocket. Gln165 contacts (R)-pantoate. Residues Val188 and Leu196–Arg199 contribute to the ATP site.

The protein belongs to the pantothenate synthetase family. In terms of assembly, homodimer.

The protein resides in the cytoplasm. The catalysed reaction is (R)-pantoate + beta-alanine + ATP = (R)-pantothenate + AMP + diphosphate + H(+). It functions in the pathway cofactor biosynthesis; (R)-pantothenate biosynthesis; (R)-pantothenate from (R)-pantoate and beta-alanine: step 1/1. In terms of biological role, catalyzes the condensation of pantoate with beta-alanine in an ATP-dependent reaction via a pantoyl-adenylate intermediate. The chain is Pantothenate synthetase from Rhodococcus jostii (strain RHA1).